The chain runs to 118 residues: D-dopachrome decarboxylase-B (118 aa).

Pro2 is modified (N-acetylproline).

Belongs to the MIF family. Homotrimer.

It localises to the cytoplasm. It carries out the reaction D-dopachrome + H(+) = 5,6-dihydroxyindole + CO2. Its function is as follows. Tautomerization of D-dopachrome with decarboxylation to give 5,6-dihydroxyindole (DHI). In Xenopus laevis (African clawed frog), this protein is D-dopachrome decarboxylase-B (ddt-b).